The following is an 838-amino-acid chain: DNA gyrase subunit A (838 aa).

Residues 41–510 (LPEVRDGLKP…ADGDVSDEDL (470 aa)) form the Topo IIA-type catalytic domain. Y129 serves as the catalytic O-(5'-phospho-DNA)-tyrosine intermediate. Residues 537–543 (QKRGGKG) carry the GyrA-box motif.

The protein belongs to the type II topoisomerase GyrA/ParC subunit family. Heterotetramer, composed of two GyrA and two GyrB chains. In the heterotetramer, GyrA contains the active site tyrosine that forms a transient covalent intermediate with DNA, while GyrB binds cofactors and catalyzes ATP hydrolysis.

It is found in the cytoplasm. It catalyses the reaction ATP-dependent breakage, passage and rejoining of double-stranded DNA.. Functionally, a type II topoisomerase that negatively supercoils closed circular double-stranded (ds) DNA in an ATP-dependent manner to modulate DNA topology and maintain chromosomes in an underwound state. Negative supercoiling favors strand separation, and DNA replication, transcription, recombination and repair, all of which involve strand separation. Also able to catalyze the interconversion of other topological isomers of dsDNA rings, including catenanes and knotted rings. Type II topoisomerases break and join 2 DNA strands simultaneously in an ATP-dependent manner. This is DNA gyrase subunit A from Mycobacterium tuberculosis (strain CDC 1551 / Oshkosh).